We begin with the raw amino-acid sequence, 880 residues long: Alanine--tRNA ligase (880 aa).

Residues H567, H571, C669, and H673 each coordinate Zn(2+).

This sequence belongs to the class-II aminoacyl-tRNA synthetase family. Requires Zn(2+) as cofactor.

The protein localises to the cytoplasm. It catalyses the reaction tRNA(Ala) + L-alanine + ATP = L-alanyl-tRNA(Ala) + AMP + diphosphate. Catalyzes the attachment of alanine to tRNA(Ala) in a two-step reaction: alanine is first activated by ATP to form Ala-AMP and then transferred to the acceptor end of tRNA(Ala). Also edits incorrectly charged Ser-tRNA(Ala) and Gly-tRNA(Ala) via its editing domain. The sequence is that of Alanine--tRNA ligase from Bacillus cereus (strain ATCC 14579 / DSM 31 / CCUG 7414 / JCM 2152 / NBRC 15305 / NCIMB 9373 / NCTC 2599 / NRRL B-3711).